A 230-amino-acid chain; its full sequence is Cytochrome c oxidase subunit 2 (230 aa).

The Mitochondrial intermembrane segment spans residues 1–14 (MAHPSQLGFQDAAS). A helical membrane pass occupies residues 15 to 45 (PVMEELLHFHDHTLMIVFLISTLVLYIIMAM). Residues 46–59 (VSTKLTNKYILDSQ) are Mitochondrial matrix-facing. A helical membrane pass occupies residues 60–87 (EIEIVWTILPAVILIMIALPSLRILYLM). Topologically, residues 88-230 (DEINDPHLTI…SWSSLMLEEA (143 aa)) are mitochondrial intermembrane. Residues histidine 161, cysteine 196, glutamate 198, cysteine 200, histidine 204, and methionine 207 each contribute to the Cu cation site. Glutamate 198 provides a ligand contact to Mg(2+).

Belongs to the cytochrome c oxidase subunit 2 family. Component of the cytochrome c oxidase (complex IV, CIV), a multisubunit enzyme composed of 14 subunits. The complex is composed of a catalytic core of 3 subunits MT-CO1, MT-CO2 and MT-CO3, encoded in the mitochondrial DNA, and 11 supernumerary subunits COX4I, COX5A, COX5B, COX6A, COX6B, COX6C, COX7A, COX7B, COX7C, COX8 and NDUFA4, which are encoded in the nuclear genome. The complex exists as a monomer or a dimer and forms supercomplexes (SCs) in the inner mitochondrial membrane with NADH-ubiquinone oxidoreductase (complex I, CI) and ubiquinol-cytochrome c oxidoreductase (cytochrome b-c1 complex, complex III, CIII), resulting in different assemblies (supercomplex SCI(1)III(2)IV(1) and megacomplex MCI(2)III(2)IV(2)). Found in a complex with TMEM177, COA6, COX18, COX20, SCO1 and SCO2. Interacts with TMEM177 in a COX20-dependent manner. Interacts with COX20. Interacts with COX16. Cu cation serves as cofactor.

The protein localises to the mitochondrion inner membrane. It catalyses the reaction 4 Fe(II)-[cytochrome c] + O2 + 8 H(+)(in) = 4 Fe(III)-[cytochrome c] + 2 H2O + 4 H(+)(out). Functionally, component of the cytochrome c oxidase, the last enzyme in the mitochondrial electron transport chain which drives oxidative phosphorylation. The respiratory chain contains 3 multisubunit complexes succinate dehydrogenase (complex II, CII), ubiquinol-cytochrome c oxidoreductase (cytochrome b-c1 complex, complex III, CIII) and cytochrome c oxidase (complex IV, CIV), that cooperate to transfer electrons derived from NADH and succinate to molecular oxygen, creating an electrochemical gradient over the inner membrane that drives transmembrane transport and the ATP synthase. Cytochrome c oxidase is the component of the respiratory chain that catalyzes the reduction of oxygen to water. Electrons originating from reduced cytochrome c in the intermembrane space (IMS) are transferred via the dinuclear copper A center (CU(A)) of subunit 2 and heme A of subunit 1 to the active site in subunit 1, a binuclear center (BNC) formed by heme A3 and copper B (CU(B)). The BNC reduces molecular oxygen to 2 water molecules using 4 electrons from cytochrome c in the IMS and 4 protons from the mitochondrial matrix. The chain is Cytochrome c oxidase subunit 2 (MT-CO2) from Squalus acanthias (Spiny dogfish).